Reading from the N-terminus, the 150-residue chain is Ribonuclease K6 (150 aa).

Residues 1–23 (MVLCFPLLLLLLVLWGPVCPLHA) form the signal peptide. H38 functions as the Proton acceptor in the catalytic mechanism. 4 cysteine pairs are disulfide-bonded: C46–C104, C60–C114, C78–C129, and C85–C92. N-linked (GlcNAc...) asparagine glycosylation is present at N55. Substrate-binding positions include 61-65 (KHQNT) and K86. The N-linked (GlcNAc...) asparagine glycan is linked to N100. Residue R105 participates in substrate binding. H145 functions as the Proton donor in the catalytic mechanism.

This sequence belongs to the pancreatic ribonuclease family. In terms of assembly, interacts (via N-terminus) with bacterial lipopolysaccharide (LPS).

It localises to the secreted. It is found in the lysosome. The protein resides in the cytoplasmic granule. Its function is as follows. Ribonuclease which shows a preference for the pyrimidines uridine and cytosine. Has potent antibacterial activity against a range of Gram-positive and Gram-negative bacteria, including P.aeruginosa, A.baumanii, M.luteus, S.aureus, E.faecalis, E.faecium, S.saprophyticus and E.coli. Causes loss of bacterial membrane integrity, and also promotes agglutination of Gram-negative bacteria. Probably contributes to urinary tract sterility. Bactericidal activity is independent of RNase activity. This is Ribonuclease K6 (RNASE6) from Gorilla gorilla gorilla (Western lowland gorilla).